Consider the following 209-residue polypeptide: Ras-related protein Rab-2-A (209 aa).

13 to 21 (GDTGVGKSC) serves as a coordination point for GTP. Residues 35 to 43 (HDLTIGVEF) carry the Effector region motif. Residues 61–65 (DTAGQ), 119–122 (NKCD), and 149–151 (SAK) contribute to the GTP site. S-geranylgeranyl cysteine attachment occurs at residues C207 and C208.

The protein belongs to the small GTPase superfamily. Rab family.

The protein localises to the endoplasmic reticulum membrane. It is found in the golgi apparatus membrane. In terms of biological role, protein transport. Probably involved in vesicular traffic. This is Ras-related protein Rab-2-A (RAB2A) from Zea mays (Maize).